A 340-amino-acid chain; its full sequence is Glycerol-3-phosphate dehydrogenase [NAD(P)+] (340 aa).

NADPH-binding residues include Ser-14, Phe-15, Arg-35, and Lys-108. Residues Lys-108 and Gly-136 each contribute to the sn-glycerol 3-phosphate site. Ala-140 serves as a coordination point for NADPH. Sn-glycerol 3-phosphate contacts are provided by Lys-191, Asp-244, Ser-254, Arg-255, and Asn-256. Residue Lys-191 is the Proton acceptor of the active site. Arg-255 is a binding site for NADPH. Glu-281 is an NADPH binding site.

The protein belongs to the NAD-dependent glycerol-3-phosphate dehydrogenase family.

It localises to the cytoplasm. The catalysed reaction is sn-glycerol 3-phosphate + NAD(+) = dihydroxyacetone phosphate + NADH + H(+). The enzyme catalyses sn-glycerol 3-phosphate + NADP(+) = dihydroxyacetone phosphate + NADPH + H(+). The protein operates within membrane lipid metabolism; glycerophospholipid metabolism. Its function is as follows. Catalyzes the reduction of the glycolytic intermediate dihydroxyacetone phosphate (DHAP) to sn-glycerol 3-phosphate (G3P), the key precursor for phospholipid synthesis. The chain is Glycerol-3-phosphate dehydrogenase [NAD(P)+] from Pseudomonas aeruginosa (strain ATCC 15692 / DSM 22644 / CIP 104116 / JCM 14847 / LMG 12228 / 1C / PRS 101 / PAO1).